A 483-amino-acid chain; its full sequence is Essential nuclear protein 1 (483 aa).

Disordered stretches follow at residues 1 to 21, 33 to 55, 67 to 123, and 171 to 200; these read MARA…LKDL, KKKL…GYID, KEQQ…EGDY, and ESQV…GLKS. The span at 96–123 shows a compositional bias: acidic residues; it reads YDDEDEDEDEDEEAFGEDISDFEPEGDY. Ser-172 bears the Phosphoserine; by ATM or ATR mark. Residues 174 to 183 are compositionally biased toward acidic residues; sequence VEDMQDDEPL. The span at 185–198 shows a compositional bias: polar residues; the sequence is NEQNTSRGNISSGL. Phosphoserine is present on residues Ser-190 and Ser-404.

This sequence belongs to the bystin family.

The protein resides in the cytoplasm. It is found in the nucleus. The protein localises to the nucleolus. In terms of biological role, required for normal export of the pre-40S particles from the nucleus to the cytoplasm. Its subcellular location and association with pre-40S subunit shifts from mixed cytoplasm/nucleus to all nuclear in RPS19 disruptions, suggesting it acts after the ribosomal protein. The polypeptide is Essential nuclear protein 1 (ENP1) (Saccharomyces cerevisiae (strain ATCC 204508 / S288c) (Baker's yeast)).